The chain runs to 403 residues: D-galactonate dehydratase family member RspA (403 aa).

Substrate-binding residues include asparagine 37 and histidine 122. Tyrosine 159 (proton donor/acceptor) is an active-site residue. Aspartate 211 is a binding site for Mg(2+). The Proton donor/acceptor role is filled by histidine 213. Glutamate 237 and glutamate 263 together coordinate Mg(2+). Positions 263, 284, 313, 317, and 340 each coordinate substrate.

This sequence belongs to the mandelate racemase/muconate lactonizing enzyme family. GalD subfamily. It depends on Mg(2+) as a cofactor.

The catalysed reaction is D-mannonate = 2-dehydro-3-deoxy-D-gluconate + H2O. It catalyses the reaction D-gluconate = 2-dehydro-3-deoxy-D-gluconate + H2O. Functionally, has low dehydratase activity with D-mannonate and D-gluconate, suggesting that these are not physiological substrates and that it has no significant role in the in vivo degradation of these compounds. Has no detectable activity with a panel of 70 other acid sugars (in vitro). In Halomonas elongata (strain ATCC 33173 / DSM 2581 / NBRC 15536 / NCIMB 2198 / 1H9), this protein is D-galactonate dehydratase family member RspA (rspA).